The primary structure comprises 91 residues: ATP-dependent Clp protease adapter protein ClpS (91 aa).

The protein belongs to the ClpS family. In terms of assembly, binds to the N-terminal domain of the chaperone ClpA.

Functionally, involved in the modulation of the specificity of the ClpAP-mediated ATP-dependent protein degradation. The protein is ATP-dependent Clp protease adapter protein ClpS of Synechococcus sp. (strain ATCC 27144 / PCC 6301 / SAUG 1402/1) (Anacystis nidulans).